A 210-amino-acid polypeptide reads, in one-letter code: ATP-dependent dethiobiotin synthetase BioD (210 aa).

Position 12–17 (N12–H17) interacts with ATP. Position 16 (T16) interacts with Mg(2+). K37 is a catalytic residue. T41 lines the substrate pocket. Residue E114 participates in Mg(2+) binding. E114–G117 is a binding site for ATP.

It belongs to the dethiobiotin synthetase family. Homodimer. Requires Mg(2+) as cofactor.

It is found in the cytoplasm. It carries out the reaction (7R,8S)-7,8-diammoniononanoate + CO2 + ATP = (4R,5S)-dethiobiotin + ADP + phosphate + 3 H(+). It participates in cofactor biosynthesis; biotin biosynthesis; biotin from 7,8-diaminononanoate: step 1/2. In terms of biological role, catalyzes a mechanistically unusual reaction, the ATP-dependent insertion of CO2 between the N7 and N8 nitrogen atoms of 7,8-diaminopelargonic acid (DAPA, also called 7,8-diammoniononanoate) to form a ureido ring. The chain is ATP-dependent dethiobiotin synthetase BioD from Sulfurovum sp. (strain NBC37-1).